We begin with the raw amino-acid sequence, 114 residues long: Ribosome-binding factor A (114 aa).

It belongs to the RbfA family. In terms of assembly, monomer. Binds 30S ribosomal subunits, but not 50S ribosomal subunits or 70S ribosomes.

The protein localises to the cytoplasm. One of several proteins that assist in the late maturation steps of the functional core of the 30S ribosomal subunit. Associates with free 30S ribosomal subunits (but not with 30S subunits that are part of 70S ribosomes or polysomes). Required for efficient processing of 16S rRNA. May interact with the 5'-terminal helix region of 16S rRNA. In Vesicomyosocius okutanii subsp. Calyptogena okutanii (strain HA), this protein is Ribosome-binding factor A.